We begin with the raw amino-acid sequence, 321 residues long: UPF0026 protein MJ1312 (321 aa).

The Radical SAM core domain maps to 11–236 (RRLGKSLGIN…AIFNEIIGKN (226 aa)). Residues cysteine 27, cysteine 31, and cysteine 34 each contribute to the [4Fe-4S] cluster site.

Belongs to the UPF0026 family. Requires [4Fe-4S] cluster as cofactor.

The polypeptide is UPF0026 protein MJ1312 (Methanocaldococcus jannaschii (strain ATCC 43067 / DSM 2661 / JAL-1 / JCM 10045 / NBRC 100440) (Methanococcus jannaschii)).